The primary structure comprises 655 residues: p-hydroxybenzoic acid efflux pump subunit AaeB (655 aa).

Residues 1–12 are Periplasmic-facing; that stretch reads MGIFSIANQHIR. A helical membrane pass occupies residues 13-33; that stretch reads FAVKLACAIVLALFIGFHFQL. The Cytoplasmic segment spans residues 34–37; sequence ETPR. The helical transmembrane segment at 38–58 threads the bilayer; sequence WAVLTAAIVAAGPAFAAGGEP. Over 59 to 68 the chain is Periplasmic; it reads YSGAIRYRGM. A helical membrane pass occupies residues 69 to 89; it reads LRIIGTFIGCIAALIIIISMI. Over 90–92 the chain is Cytoplasmic; the sequence is RAP. The helical transmembrane segment at 93 to 113 threads the bilayer; sequence LLMILVCCVWAGFCTWISSLV. At 114-120 the chain is on the periplasmic side; sequence RIENSYA. The chain crosses the membrane as a helical span at residues 121–141; that stretch reads WGLSGYTALIIVITIQTEPLL. Over 142-151 the chain is Cytoplasmic; it reads TPQFALERCS. A helical membrane pass occupies residues 152-172; that stretch reads EIVIGIGCAILADLLFSPRSI. Residues 173–369 are Periplasmic-facing; sequence KQEVDRELDC…RTTLSCILGT (197 aa). Residues 370-390 form a helical membrane-spanning segment; the sequence is LFWLWTGWTSGNGAMVMIAVV. The Cytoplasmic segment spans residues 391 to 406; it reads TSLAMRLPNPRMVCID. The helical transmembrane segment at 407–427 threads the bilayer; that stretch reads FIYGTLAALPLGLLYFLVIIP. The Periplasmic portion of the chain corresponds to 428–430; that stretch reads NTQ. Residues 431-451 traverse the membrane as a helical segment; that stretch reads QSMLLLCLSLAVLGFFIGIEV. At 452–459 the chain is on the cytoplasmic side; the sequence is QKRRLGSM. A helical membrane pass occupies residues 460 to 480; the sequence is GALASTINIIVLDNPMTFHFI. Residue glutamine 481 is a topological domain, periplasmic. Residues 482–502 traverse the membrane as a helical segment; sequence FLDSALGQIVGCMLAFIVILL. Topologically, residues 503–655 are cytoplasmic; that stretch reads VRDKSKDRTG…HKYQNALTDS (153 aa).

Belongs to the aromatic acid exporter ArAE (TC 2.A.85) family.

The protein localises to the cell inner membrane. Forms an efflux pump with AaeA. Could function as a metabolic relief valve, allowing to eliminate certain compounds when they accumulate to high levels in the cell. The protein is p-hydroxybenzoic acid efflux pump subunit AaeB of Salmonella typhi.